A 736-amino-acid polypeptide reads, in one-letter code: Elongation factor 2 (736 aa).

The tr-type G domain maps to 18–261 (EQVRNIGITA…MVVKFIPNPR (244 aa)). GTP contacts are provided by residues 27–34 (AHVDHGKT), 93–97 (DTPGH), and 147–150 (NKVD). Diphthamide is present on histidine 602.

Belongs to the TRAFAC class translation factor GTPase superfamily. Classic translation factor GTPase family. EF-G/EF-2 subfamily.

The protein resides in the cytoplasm. In terms of biological role, catalyzes the GTP-dependent ribosomal translocation step during translation elongation. During this step, the ribosome changes from the pre-translocational (PRE) to the post-translocational (POST) state as the newly formed A-site-bound peptidyl-tRNA and P-site-bound deacylated tRNA move to the P and E sites, respectively. Catalyzes the coordinated movement of the two tRNA molecules, the mRNA and conformational changes in the ribosome. The sequence is that of Elongation factor 2 from Staphylothermus marinus (strain ATCC 43588 / DSM 3639 / JCM 9404 / F1).